A 489-amino-acid polypeptide reads, in one-letter code: Protein DETOXIFICATION 26 (489 aa).

12 consecutive transmembrane segments (helical) span residues isoleucine 42–isoleucine 62, leucine 75–glycine 95, isoleucine 125–leucine 145, leucine 157–proline 177, valine 190–valine 210, isoleucine 217–leucine 237, isoleucine 271–valine 291, leucine 300–glycine 320, isoleucine 342–phenylalanine 362, valine 385–valine 405, isoleucine 416–phenylalanine 436, and glycine 442–isoleucine 462.

The protein belongs to the multi antimicrobial extrusion (MATE) (TC 2.A.66.1) family.

The protein localises to the membrane. In Arabidopsis thaliana (Mouse-ear cress), this protein is Protein DETOXIFICATION 26.